We begin with the raw amino-acid sequence, 148 residues long: Transcriptional repressor NrdR (148 aa).

The segment at cysteine 3 to cysteine 32 is a zinc-finger region. The 91-residue stretch at leucine 47–glutamate 137 folds into the ATP-cone domain.

The protein belongs to the NrdR family. It depends on Zn(2+) as a cofactor.

Its function is as follows. Negatively regulates transcription of bacterial ribonucleotide reductase nrd genes and operons by binding to NrdR-boxes. The sequence is that of Transcriptional repressor NrdR from Lactococcus lactis subsp. lactis (strain IL1403) (Streptococcus lactis).